Here is a 600-residue protein sequence, read N- to C-terminus: Aspartate--tRNA(Asp/Asn) ligase (600 aa).

E187 serves as a coordination point for L-aspartate. Residues 211–214 (QIFK) are aspartate. Residues R233 and H463 each coordinate L-aspartate. Residue 233-235 (RDE) coordinates ATP. Position 497 (E497) interacts with ATP. Residue R504 coordinates L-aspartate. Residue 549 to 552 (GVDR) coordinates ATP.

It belongs to the class-II aminoacyl-tRNA synthetase family. Type 1 subfamily. In terms of assembly, homodimer.

Its subcellular location is the cytoplasm. It catalyses the reaction tRNA(Asx) + L-aspartate + ATP = L-aspartyl-tRNA(Asx) + AMP + diphosphate. Aspartyl-tRNA synthetase with relaxed tRNA specificity since it is able to aspartylate not only its cognate tRNA(Asp) but also tRNA(Asn). Reaction proceeds in two steps: L-aspartate is first activated by ATP to form Asp-AMP and then transferred to the acceptor end of tRNA(Asp/Asn). This Wolbachia sp. subsp. Drosophila simulans (strain wRi) protein is Aspartate--tRNA(Asp/Asn) ligase.